Consider the following 88-residue polypeptide: Small ribosomal subunit protein uS15 (88 aa).

Belongs to the universal ribosomal protein uS15 family. In terms of assembly, part of the 30S ribosomal subunit. Forms a bridge to the 50S subunit in the 70S ribosome, contacting the 23S rRNA.

Its function is as follows. One of the primary rRNA binding proteins, it binds directly to 16S rRNA where it helps nucleate assembly of the platform of the 30S subunit by binding and bridging several RNA helices of the 16S rRNA. Forms an intersubunit bridge (bridge B4) with the 23S rRNA of the 50S subunit in the ribosome. The protein is Small ribosomal subunit protein uS15 of Hydrogenovibrio crunogenus (strain DSM 25203 / XCL-2) (Thiomicrospira crunogena).